The primary structure comprises 234 residues: Putative ankyrin repeat protein RF_0063 (234 aa).

ANK repeat units follow at residues 149–180 (NNNT…TISI) and 184–213 (YNNT…QKAL).

This Rickettsia felis (strain ATCC VR-1525 / URRWXCal2) (Rickettsia azadi) protein is Putative ankyrin repeat protein RF_0063.